The sequence spans 540 residues: Phosphoenolpyruvate carboxykinase (ATP) (540 aa).

R65 contributes to the substrate binding site. K87 carries the N6-acetyllysine modification. The substrate site is built by Y207 and K213. ATP contacts are provided by residues K213, H232, and 248–256 (GLSGTGKTT). 2 residues coordinate Mn(2+): K213 and H232. D269 is a binding site for Mn(2+). ATP-binding positions include E297, R333, 449–450 (RI), and T455. R333 serves as a coordination point for substrate. At K523 the chain carries N6-acetyllysine.

Belongs to the phosphoenolpyruvate carboxykinase (ATP) family. In terms of assembly, monomer. It depends on Mn(2+) as a cofactor.

Its subcellular location is the cytoplasm. The catalysed reaction is oxaloacetate + ATP = phosphoenolpyruvate + ADP + CO2. It functions in the pathway carbohydrate biosynthesis; gluconeogenesis. Its function is as follows. Involved in the gluconeogenesis. Catalyzes the conversion of oxaloacetate (OAA) to phosphoenolpyruvate (PEP) through direct phosphoryl transfer between the nucleoside triphosphate and OAA. In Shigella dysenteriae serotype 1 (strain Sd197), this protein is Phosphoenolpyruvate carboxykinase (ATP).